A 276-amino-acid chain; its full sequence is Large ribosomal subunit protein uL2 (276 aa).

Residues 221–276 (RGSVMNPNDHPHGGGEGRAPIGRKAPVTPWGKPTLGLKTRKKKNKSDQYIIRRRKK) are disordered.

The protein belongs to the universal ribosomal protein uL2 family. Part of the 50S ribosomal subunit. Forms a bridge to the 30S subunit in the 70S ribosome.

Its function is as follows. One of the primary rRNA binding proteins. Required for association of the 30S and 50S subunits to form the 70S ribosome, for tRNA binding and peptide bond formation. It has been suggested to have peptidyltransferase activity; this is somewhat controversial. Makes several contacts with the 16S rRNA in the 70S ribosome. The protein is Large ribosomal subunit protein uL2 of Brevibacillus brevis (strain 47 / JCM 6285 / NBRC 100599).